The chain runs to 125 residues: MVVEQKEQEPIVKMRDRNVNAAAHSALARGIEALNEGEVTEETEEIRKLDTQLDHLNDYMSKMEERLKAHNDRMMETLKQQKEEREKRRRSFHERMSQNQSEDEEFKKQMSSILKRVQSVKRTEK.

Positions isoleucine 46 to arginine 95 form a coiled coil. The interval lysine 79–lysine 125 is disordered.

As to expression, expressed in many epithelial tissues, including the pharynx, intestine, excretory canal and hypodermis.

It is found in the cell junction. It localises to the cytoplasm. The protein resides in the cytoskeleton. Its function is as follows. Dynamic component of the endotube in intestinal cells, interacts with intermediate filament and regulates intestinal lumen morphology. The sequence is that of Bublin coiled-coil protein from Caenorhabditis elegans.